Reading from the N-terminus, the 297-residue chain is Tyrosine recombinase XerC (297 aa).

The 84-residue stretch at 1-84 (MEEIQVTFLN…TLRTFYEFWM (84 aa)) folds into the Core-binding (CB) domain. Residues 105–286 (YLPQFFYEEE…SNQQLRKVYL (182 aa)) form the Tyr recombinase domain. Residues R145, K169, H238, R241, and H264 contribute to the active site. Residue Y273 is the O-(3'-phospho-DNA)-tyrosine intermediate of the active site.

Belongs to the 'phage' integrase family. XerC subfamily. In terms of assembly, forms a cyclic heterotetrameric complex composed of two molecules of XerC and two molecules of XerD.

It localises to the cytoplasm. Functionally, site-specific tyrosine recombinase, which acts by catalyzing the cutting and rejoining of the recombining DNA molecules. The XerC-XerD complex is essential to convert dimers of the bacterial chromosome into monomers to permit their segregation at cell division. It also contributes to the segregational stability of plasmids. In Staphylococcus haemolyticus (strain JCSC1435), this protein is Tyrosine recombinase XerC.